Consider the following 461-residue polypeptide: Tubulin gamma-1 chain (461 aa).

142-148 provides a ligand contact to GTP; that stretch reads AGGTGSG.

The protein belongs to the tubulin family.

It localises to the cytoplasm. The protein resides in the cytoskeleton. The protein localises to the microtubule organizing center. Its subcellular location is the centrosome. Tubulin is the major constituent of microtubules. The gamma chain is found at microtubule organizing centers (MTOC) such as the spindle poles or the centrosome, suggesting that it is involved in the minus-end nucleation of microtubule assembly. The polypeptide is Tubulin gamma-1 chain (Euplotoides octocarinatus (Freshwater ciliate)).